The chain runs to 199 residues: N-(5'-phosphoribosyl)anthranilate isomerase (199 aa).

Belongs to the TrpF family.

It catalyses the reaction N-(5-phospho-beta-D-ribosyl)anthranilate = 1-(2-carboxyphenylamino)-1-deoxy-D-ribulose 5-phosphate. It participates in amino-acid biosynthesis; L-tryptophan biosynthesis; L-tryptophan from chorismate: step 3/5. The sequence is that of N-(5'-phosphoribosyl)anthranilate isomerase from Streptococcus pneumoniae (strain ATCC BAA-255 / R6).